The primary structure comprises 276 residues: Putative pyruvate, phosphate dikinase regulatory protein 1 (276 aa).

Gly-150 to Thr-157 is a binding site for ADP.

Belongs to the pyruvate, phosphate/water dikinase regulatory protein family. PDRP subfamily.

It catalyses the reaction N(tele)-phospho-L-histidyl/L-threonyl-[pyruvate, phosphate dikinase] + ADP = N(tele)-phospho-L-histidyl/O-phospho-L-threonyl-[pyruvate, phosphate dikinase] + AMP + H(+). The enzyme catalyses N(tele)-phospho-L-histidyl/O-phospho-L-threonyl-[pyruvate, phosphate dikinase] + phosphate + H(+) = N(tele)-phospho-L-histidyl/L-threonyl-[pyruvate, phosphate dikinase] + diphosphate. Its function is as follows. Bifunctional serine/threonine kinase and phosphorylase involved in the regulation of the pyruvate, phosphate dikinase (PPDK) by catalyzing its phosphorylation/dephosphorylation. This chain is Putative pyruvate, phosphate dikinase regulatory protein 1, found in Syntrophomonas wolfei subsp. wolfei (strain DSM 2245B / Goettingen).